Consider the following 345-residue polypeptide: NADH-quinone oxidoreductase subunit H (345 aa).

8 helical membrane-spanning segments follow: residues 14–34 (IILAQVLAVVAFVMISLLFLV), 84–104 (FILAPMTSFVLAMIAWAVIPF), 115–135 (VAILYVFAVSSLEVYGVIMGG), 161–181 (IGLIIIGVILSTGSMNFGDIV), 187–207 (GWGFFGWYWLPHFPMVFLFFI), 248–268 (YIAIFLMCALTSLLFFGGWLS), 277–297 (VLWMVAKMAFFFFIFAMVKAI), and 309–329 (LGWKVFLPFSLVWVVFVAFAA).

Belongs to the complex I subunit 1 family. NDH-1 is composed of 14 different subunits. Subunits NuoA, H, J, K, L, M, N constitute the membrane sector of the complex.

It localises to the cell inner membrane. It carries out the reaction a quinone + NADH + 5 H(+)(in) = a quinol + NAD(+) + 4 H(+)(out). NDH-1 shuttles electrons from NADH, via FMN and iron-sulfur (Fe-S) centers, to quinones in the respiratory chain. The immediate electron acceptor for the enzyme in this species is believed to be ubiquinone. Couples the redox reaction to proton translocation (for every two electrons transferred, four hydrogen ions are translocated across the cytoplasmic membrane), and thus conserves the redox energy in a proton gradient. This subunit may bind ubiquinone. This is NADH-quinone oxidoreductase subunit H from Ruegeria pomeroyi (strain ATCC 700808 / DSM 15171 / DSS-3) (Silicibacter pomeroyi).